Consider the following 376-residue polypeptide: MRIAAILVAGGSGSRFGSDIPKQFLPVGGKPLIRHGAERLSAKVDLLQPVGCADDIAPLLQGLDHLPIVDGGKERQDSVRAGLEALVPYAPDIVLIHDAARPYFPDHTIEDLIEALQIHDGAIPAVPVADTLKRAAGNIIDSTVPREGLYRAQTPQAFKFSVLLALHRDHPGGATDDAALLDQAGHSVALVPGAEDNIKVTYPADLARVERSMSISMIPRIGTGYDVHAFETGRKLILCGIEVPHHQGLAGHSDADVGIHALCDAIYGALAEGDIGRHFPPTEASWKDADSARFLRHAAERIAARGGFLANADLTLICEKPKITPHAPAMIARLAELLGVSIDKISVKATTSEKLGFTGREEGIAAQAAVIIMIPA.

Residues 1-220 (MRIAAILVAG…RSMSISMIPR (220 aa)) are 2-C-methyl-D-erythritol 4-phosphate cytidylyltransferase. Residues 220–376 (RIGTGYDVHA…QAAVIIMIPA (157 aa)) form a 2-C-methyl-D-erythritol 2,4-cyclodiphosphate synthase region. Positions 226 and 228 each coordinate a divalent metal cation. Residues 226–228 (DVH) and 252–253 (HS) each bind 4-CDP-2-C-methyl-D-erythritol 2-phosphate. Residue H260 coordinates a divalent metal cation. 4-CDP-2-C-methyl-D-erythritol 2-phosphate contacts are provided by residues 274–276 (DIG), 350–353 (TTSE), F357, and R360.

In the N-terminal section; belongs to the IspD/TarI cytidylyltransferase family. IspD subfamily. This sequence in the C-terminal section; belongs to the IspF family. Requires a divalent metal cation as cofactor.

The enzyme catalyses 2-C-methyl-D-erythritol 4-phosphate + CTP + H(+) = 4-CDP-2-C-methyl-D-erythritol + diphosphate. It catalyses the reaction 4-CDP-2-C-methyl-D-erythritol 2-phosphate = 2-C-methyl-D-erythritol 2,4-cyclic diphosphate + CMP. It functions in the pathway isoprenoid biosynthesis; isopentenyl diphosphate biosynthesis via DXP pathway; isopentenyl diphosphate from 1-deoxy-D-xylulose 5-phosphate: step 2/6. The protein operates within isoprenoid biosynthesis; isopentenyl diphosphate biosynthesis via DXP pathway; isopentenyl diphosphate from 1-deoxy-D-xylulose 5-phosphate: step 4/6. Functionally, bifunctional enzyme that catalyzes the formation of 4-diphosphocytidyl-2-C-methyl-D-erythritol from CTP and 2-C-methyl-D-erythritol 4-phosphate (MEP) (IspD), and catalyzes the conversion of 4-diphosphocytidyl-2-C-methyl-D-erythritol 2-phosphate (CDP-ME2P) to 2-C-methyl-D-erythritol 2,4-cyclodiphosphate (ME-CPP) with a corresponding release of cytidine 5-monophosphate (CMP) (IspF). In Granulibacter bethesdensis (strain ATCC BAA-1260 / CGDNIH1), this protein is Bifunctional enzyme IspD/IspF.